The primary structure comprises 393 residues: METFLFTSESVNEGHPDKLCDQISDAVLDACLAQDPESKVACETCSKTNMVMVFGEITTKADVDYEKIVRDTCRGIGFTSDDVGLDADNCKALVNIEQQSPDIAQGVHGHLSKRPEEIGAGDQGHMFGYATDETPELMPLTHVLATRLGARLTEVRKNGTCPWLRPDGKTQVTVEYYNDKGAMVPVRVHTVLISTQHDETVTNDEIAADLKEHVIKPVIPEKYLDEKTIFHLNPSGRFVIGGPHGDAGLTGRKIIIDTYGGWGAHGGGAFSGKDPTKVDRSGAYIVRQAAKSIVANGLARRCVVQVSYAIGVPEPLSVFVDTYGTGKIPDKEILKIVKETFDFRPGMIAINLDLKRGGNSRFLKTAAYGHFGRDDTDFTWEVVKPLKWDKVHA.

Glu9 is a Mg(2+) binding site. His15 contributes to the ATP binding site. Glu43 serves as a coordination point for K(+). Positions 56 and 99 each coordinate L-methionine. ATP is bound by residues 167–169, 235–238, Asp246, 252–253, Ala269, Lys273, and Lys277; these read DGK, SGRF, and RK. Residue Asp246 coordinates L-methionine. Lys277 contributes to the L-methionine binding site.

It belongs to the AdoMet synthase family. Homotetramer. The cofactor is Mn(2+). It depends on Mg(2+) as a cofactor. Co(2+) is required as a cofactor. Requires K(+) as cofactor.

The protein localises to the cytoplasm. The enzyme catalyses L-methionine + ATP + H2O = S-adenosyl-L-methionine + phosphate + diphosphate. It functions in the pathway amino-acid biosynthesis; S-adenosyl-L-methionine biosynthesis; S-adenosyl-L-methionine from L-methionine: step 1/1. In terms of biological role, catalyzes the formation of S-adenosylmethionine from methionine and ATP. The reaction comprises two steps that are both catalyzed by the same enzyme: formation of S-adenosylmethionine (AdoMet) and triphosphate, and subsequent hydrolysis of the triphosphate. The protein is S-adenosylmethionine synthase (SAMS) of Gossypium hirsutum (Upland cotton).